A 2147-amino-acid chain; its full sequence is Probable serine/threonine-protein kinase roco6 (2147 aa).

Topologically, residues 1 to 1055 (MNSIHKQHYT…LDHSRVEFNR (1055 aa)) are extracellular. 11 LRR repeats span residues 69 to 89 (DMKY…MMIP), 101 to 122 (SISI…LKQL), 124 to 145 (QLIS…FPEE), 148 to 169 (LLRK…FNKF), 171 to 192 (ILED…LFPE), 193 to 214 (GIMR…PWFE), 215 to 236 (SLLT…PFHL), 237 to 256 (VRVS…VILR), 306 to 328 (HLTH…ANLT), 329 to 350 (ELVR…IVSY), and 352 to 372 (RLEH…PRRI). In terms of domain architecture, Roc spans 390–750 (QGEPSYRVKL…DLLKKTVVEL (361 aa)). The tract at residues 390 to 750 (QGEPSYRVKL…DLLKKTVVEL (361 aa)) is small GTPase-like. 403–410 (GQENVGKT) is a binding site for GTP. 2 disordered regions span residues 491–582 (NSNG…VGTN) and 602–621 (SNLS…GGSG). 4 stretches are compositionally biased toward low complexity: residues 492–512 (SNGV…NIHS), 519–531 (NVNS…SNNS), 539–568 (NSFL…NVNS), and 602–617 (SNLS…NNNS). GTP-binding positions include 634–638 (DCAGQ) and 691–694 (THLD). The 135-residue stretch at 758–892 (PELYLKLEKL…RFELMFPLDS (135 aa)) folds into the COR domain. 2 stretches are compositionally biased toward low complexity: residues 905-941 (GNSY…SPST) and 960-977 (SGNN…RSIS). Residues 905 to 995 (GNSYVNNNNN…NSDLDLIGGG (91 aa)) form a disordered region. A WD 1 repeat occupies 1051-1098 (VEFNRWIQLSFAPAGLFSRLLIRLLISKEFDMKPILYWRNGVVVESQS). The helical transmembrane segment at 1056–1076 (WIQLSFAPAGLFSRLLIRLLI) threads the bilayer. Residues 1077–2147 (SKEFDMKPIL…CGTNNVCIWS (1071 aa)) are Cytoplasmic-facing. LRR repeat units lie at residues 1237 to 1263 (ILSI…PPPP), 1274 to 1297 (DDNI…GSQP), and 1325 to 1348 (ESSL…TYKY). The region spanning 1356–1627 (FESPKLIGRG…KIVKRIKQII (272 aa)) is the Protein kinase domain. Residues 1362-1370 (IGRGASGKI) and Lys1383 contribute to the ATP site. Asp1481 (proton acceptor) is an active-site residue. Residues 1653 to 1699 (ADSQPFHYHQQQQPSLNSTNQLQQQQYSSVLTSPRSNLSDSSNSSQN) form a disordered region. A compositionally biased stretch (low complexity) spans 1662–1699 (QQQQPSLNSTNQLQQQQYSSVLTSPRSNLSDSSNSSQN). WD repeat units follow at residues 1735–1774 (QPEA…QIFR) and 1778–1820 (LHPG…LDDQ). Residues 1821-1923 (SGTKSDFITK…WLTAINRVIN (103 aa)) form the PH domain. The stretch at 2031 to 2068 (HYSKPITSMALVEKNVWISCEDESLSVWDGDTGSFIRK) is one WD 4 repeat.

The protein belongs to the protein kinase superfamily. TKL Ser/Thr protein kinase family. ROCO subfamily.

It localises to the membrane. It catalyses the reaction L-seryl-[protein] + ATP = O-phospho-L-seryl-[protein] + ADP + H(+). The catalysed reaction is L-threonyl-[protein] + ATP = O-phospho-L-threonyl-[protein] + ADP + H(+). May act as a serine/threonine-protein kinase and guanine-nucleotide releasing factor. This chain is Probable serine/threonine-protein kinase roco6 (roco6), found in Dictyostelium discoideum (Social amoeba).